We begin with the raw amino-acid sequence, 226 residues long: PKHD-type hydroxylase Plav_0377 (226 aa).

The Fe2OG dioxygenase domain occupies 78–178; it reads KVLPPRFNRY…RLASFFWVQS (101 aa). His-96, Asp-98, and His-159 together coordinate Fe cation. Position 169 (Arg-169) interacts with 2-oxoglutarate.

Requires Fe(2+) as cofactor. L-ascorbate serves as cofactor.

The chain is PKHD-type hydroxylase Plav_0377 from Parvibaculum lavamentivorans (strain DS-1 / DSM 13023 / NCIMB 13966).